A 1009-amino-acid polypeptide reads, in one-letter code: 2-oxoglutarate dehydrogenase, mitochondrial (1009 aa).

The transit peptide at Met1–Phe39 directs the protein to the mitochondrion. 5 residues coordinate thiamine diphosphate: Arg305, Asp404, Asn437, Ile439, and Gln669. Asp404, Asn437, and Ile439 together coordinate Mg(2+).

This sequence belongs to the alpha-ketoglutarate dehydrogenase family. Thiamine diphosphate is required as a cofactor. It depends on Mg(2+) as a cofactor.

Its subcellular location is the mitochondrion matrix. It catalyses the reaction N(6)-[(R)-lipoyl]-L-lysyl-[protein] + 2-oxoglutarate + H(+) = N(6)-[(R)-S(8)-succinyldihydrolipoyl]-L-lysyl-[protein] + CO2. Catabolite repressed. Its function is as follows. The 2-oxoglutarate dehydrogenase complex catalyzes the overall conversion of 2-oxoglutarate to succinyl-CoA and CO(2). It contains multiple copies of three enzymatic components: 2-oxoglutarate dehydrogenase (E1), dihydrolipoamide succinyltransferase (E2) and lipoamide dehydrogenase (E3). The polypeptide is 2-oxoglutarate dehydrogenase, mitochondrial (kgd1) (Schizosaccharomyces pombe (strain 972 / ATCC 24843) (Fission yeast)).